We begin with the raw amino-acid sequence, 288 residues long: NAD(P)H-hydrate epimerase (288 aa).

A mitochondrion-targeting transit peptide spans 1 to 59 (MSGLRALLGLGLPVAGSRLPRVRVQAGACRARPTWWGPQRLISGGRGDVEGMASSAVKY). Positions 65–275 (AQAVDQELFN…ALEKKYQLNL (211 aa)) constitute a YjeF N-terminal domain. 119-123 (NNGGD) provides a ligand contact to (6S)-NADPHX. Asn120 serves as a coordination point for K(+). Residue Lys144 is modified to N6-succinyllysine. Asp185 provides a ligand contact to K(+). (6S)-NADPHX contacts are provided by residues 189–195 (GFSFKGE) and Asp218. Position 221 (Ser221) interacts with K(+).

This sequence belongs to the NnrE/AIBP family. Homodimer. Interacts with APOA1 and APOA2. K(+) is required as a cofactor. Undergoes physiological phosphorylation during sperm capacitation, downstream to PKA activation.

The protein localises to the mitochondrion. It is found in the secreted. The enzyme catalyses (6R)-NADHX = (6S)-NADHX. The catalysed reaction is (6R)-NADPHX = (6S)-NADPHX. Its function is as follows. Catalyzes the epimerization of the S- and R-forms of NAD(P)HX, a damaged form of NAD(P)H that is a result of enzymatic or heat-dependent hydration. This is a prerequisite for the S-specific NAD(P)H-hydrate dehydratase to allow the repair of both epimers of NAD(P)HX. Accelerates cholesterol efflux from endothelial cells to high-density lipoprotein (HDL) and thereby regulates angiogenesis. The chain is NAD(P)H-hydrate epimerase from Sus scrofa (Pig).